The chain runs to 562 residues: MEFVIGLLIVLLALFAAGYFFRKKIYAEIDRLESWKIEILNRSIVEEMSKIKHLKMTGQTEEFFEKWREEWDEIVTAHMPKVEELLYDAEENADKYRFKKANQVLVHIDDLLTAAESSIEKILREISDLVTSEEKSREEIEQVRERYSKSRKNLLAYSHLYGELYDSLEKDLDEIWSGIKQFEEETEGGNYITARKVLLEQDRNLERLQSYIDDVPKLLADCKQTVPGQIAKLKDGYGEMKEKGYKLEHIQLDKELENLSNQLKRAEHVLMTELDIDEASAILQLIDENIQSVYQQLEGEVEAGQSVLSKMPELIIAYDKLKEEKEHTKAETELVKESYRLTAGELGKQQAFEKRLDEIGKLLSSVKDKLDAEHVAYSLLVEEVASIEKQIEEVKKEHAEYRENLQALRKEELQARETLSNLKKTISETARLLKTSNIPGIPSHIQEMLENAHHHIQETVNQLNELPLNMEEAGAHLKQAEDIVNRASRESEELVEQVILIEKIIQFGNRFRSQNHILSEQLKEAERRFYAFDYDDSYEIAAAAVEKAAPGAVEKIKADISA.

The Extracellular segment spans residues 1–2; that stretch reads ME. The chain crosses the membrane as a helical span at residues 3–21; it reads FVIGLLIVLLALFAAGYFF. The Cytoplasmic segment spans residues 22–562; that stretch reads RKKIYAEIDR…VEKIKADISA (541 aa). Coiled-coil stretches lie at residues 377–425 and 470–497; these read YSLL…LKKT and MEEA…LVEQ.

Belongs to the EzrA family. In terms of processing, may be degraded by FtsH protease.

The protein localises to the cell membrane. Its subcellular location is the membrane raft. In terms of biological role, negative regulator of FtsZ ring formation; modulates the frequency and position of FtsZ ring formation. Inhibits FtsZ ring formation at polar sites. Interacts either with FtsZ or with one of its binding partners to promote depolymerization. This chain is Septation ring formation regulator EzrA, found in Bacillus subtilis (strain 168).